A 318-amino-acid chain; its full sequence is Methionyl-tRNA formyltransferase (318 aa).

112–115 (SILP) is a (6S)-5,6,7,8-tetrahydrofolate binding site.

This sequence belongs to the Fmt family.

The catalysed reaction is L-methionyl-tRNA(fMet) + (6R)-10-formyltetrahydrofolate = N-formyl-L-methionyl-tRNA(fMet) + (6S)-5,6,7,8-tetrahydrofolate + H(+). In terms of biological role, attaches a formyl group to the free amino group of methionyl-tRNA(fMet). The formyl group appears to play a dual role in the initiator identity of N-formylmethionyl-tRNA by promoting its recognition by IF2 and preventing the misappropriation of this tRNA by the elongation apparatus. This Shewanella sp. (strain W3-18-1) protein is Methionyl-tRNA formyltransferase.